A 361-amino-acid chain; its full sequence is tRNA/tmRNA (uracil-C(5))-methyltransferase (361 aa).

Q185, Y213, N218, E234, and D294 together coordinate S-adenosyl-L-methionine. The active-site Nucleophile is C319. E353 functions as the Proton acceptor in the catalytic mechanism.

This sequence belongs to the class I-like SAM-binding methyltransferase superfamily. RNA M5U methyltransferase family. TrmA subfamily.

It catalyses the reaction uridine(54) in tRNA + S-adenosyl-L-methionine = 5-methyluridine(54) in tRNA + S-adenosyl-L-homocysteine + H(+). The catalysed reaction is uridine(341) in tmRNA + S-adenosyl-L-methionine = 5-methyluridine(341) in tmRNA + S-adenosyl-L-homocysteine + H(+). Functionally, dual-specificity methyltransferase that catalyzes the formation of 5-methyluridine at position 54 (m5U54) in all tRNAs, and that of position 341 (m5U341) in tmRNA (transfer-mRNA). The chain is tRNA/tmRNA (uracil-C(5))-methyltransferase from Pseudomonas putida (strain GB-1).